The primary structure comprises 280 residues: Lacto-N-neotetraose biosynthesis glycosyltransferase LgtE (280 aa).

The protein belongs to the glycosyltransferase 25 family.

The protein operates within glycan metabolism; lacto-N-neotetraose biosynthesis. It participates in bacterial outer membrane biogenesis; lipooligosaccharide biosynthesis. Adds the first galactose to the lacto-N-tetraose chain in lipooligosaccharide (LOS). The sequence is that of Lacto-N-neotetraose biosynthesis glycosyltransferase LgtE (lgtE) from Neisseria meningitidis serogroup B (strain ATCC BAA-335 / MC58).